We begin with the raw amino-acid sequence, 196 residues long: Putative HTH-type transcriptional regulator protein PtxE (196 aa).

Residues 1 to 59 (MLNPVWLKSLVAIVQTGSFQSAARALGLAQPTVSQHLQKLEEQVGVTLVQRSRSGCQPT) enclose the HTH lysR-type domain. Residues 19 to 38 (FQSAARALGLAQPTVSQHLQ) constitute a DNA-binding region (H-T-H motif).

The protein belongs to the LysR transcriptional regulatory family.

The chain is Putative HTH-type transcriptional regulator protein PtxE (ptxE) from Stutzerimonas stutzeri (Pseudomonas stutzeri).